The primary structure comprises 135 residues: UPF0355 protein SACOL0457 (135 aa).

This sequence belongs to the UPF0355 family.

In Staphylococcus aureus (strain COL), this protein is UPF0355 protein SACOL0457.